Consider the following 959-residue polypeptide: Bifunctional premutilin synthase (959 aa).

The tract at residues 1–542 (MGLSEDLHAR…ALNVPIPRFD (542 aa)) is class II diterpene cyclase. A DXDD motif motif is present at residues 309–312 (DADM). Residue Asp311 is the For class II diterpene cyclase activity of the active site. A class I diterpene synthase region spans residues 543-959 (PASITTLPPI…TANGSNGIHH (417 aa)). Catalysis depends on Asp649, which acts as the For class I diterpene synthase activity. Positions 649, 653, and 824 each coordinate Mg(2+). The short motif at 649–653 (DDYLD) is the DDXXD motif element. The interval 931–959 (KGANGVKKTNGLTTNGTKATANGSNGIHH) is disordered. Over residues 934-959 (NGVKKTNGLTTNGTKATANGSNGIHH) the composition is skewed to low complexity.

This sequence belongs to the terpene synthase family. Requires Mg(2+) as cofactor.

It participates in secondary metabolite biosynthesis; terpenoid biosynthesis. Functionally, bifunctional premutilin synthase; part of the gene cluster that mediates the biosynthesis of pleuromutilin, a tricyclic diterpene showing antibacterial properties. The geranylgeranyl diphosphate (GGPP) synthase ple4 catalyzes the first step in pleuromutilin biosynthesis. GGPP is then substrate of the premutilin synthase (PS) ple3 to yield premutilin. Premutilin synthase is a bifunctional enzyme composed of the fusion of a class II diterpene cyclase (DTC) and a class I diterpene synthase (DTS), with the corresponding domains and active sites containing characteristic aspartate-rich motifs. GGPP is first converted to mutildienyl-diphosphate (MPP) at the class II DTC site. MPP is subsequently further cyclized at the class I DTS site, followed by a 1,5-hydride shift and addition of water prior to terminating deprotonation, to yield premutilin. The cytochrome P450 monooxygenases ple5 and ple6 hydroxylate premutilin at C-11 and C-3, respectively, producing 11-hydroxypremutilin and 3-hydroxypremutilin. The combination of the actions of both ple5 and ple6 leads to the production of 3,11-dihydroxypremutilin. The short chain dehydrogenase ple7 further converts 3,11-dihydroxypremutilin into mutilin. The acetyltransferase ple2 then acetylates mutilin to produce 14-O-acetylmutilin. Finally, the cytochrome P450 monooxygenase ple1 catalyzes hydroxylation on the alpha position of the acetyl side chain of 14-O-acetylmutilin to yield pleuromutilin. The polypeptide is Bifunctional premutilin synthase (Rhodocybe pseudopiperita (Clitopilus pseudopiperitus)).